Reading from the N-terminus, the 146-residue chain is Large ribosomal subunit protein uL15 (146 aa).

The interval 1–56 (MRLHDLRPVPGSRQKPTRKGQGIGSGLGKTAGRGQKGQKARSGGGVRPGFEGGQMP) is disordered. Gly residues-rich tracts occupy residues 21 to 35 (QGIG…GRGQ) and 42 to 52 (SGGGVRPGFEG).

Belongs to the universal ribosomal protein uL15 family. As to quaternary structure, part of the 50S ribosomal subunit.

Its function is as follows. Binds to the 23S rRNA. This chain is Large ribosomal subunit protein uL15, found in Carboxydothermus hydrogenoformans (strain ATCC BAA-161 / DSM 6008 / Z-2901).